The primary structure comprises 297 residues: MIDLSTLTTERRNDETFNLDQMTVKEALVKMNNEDKKVAYAVEEALPNIEPVISSAIEAFNKGGRLIYMGAGTSGRLGVLDAAECVPTFGVPATQVVGLIAGGDKAMTVAVEGAEDSLELGRQDLIDLNLSENDLVLGIAASGRTPYVIGALDYAKEIGAKRASLSCNLNAEISKHAEFPIEVDCGPEFLTGSTRLKSGTAQKLILNMISTISMIGIGKVYNNLMVDVKPTNEKLVERSKRIIMQATDCTYEEAEEKFNEANQDVKLAIVMLLTDCAAEEGKTKLVKANGFVKNTLN.

One can recognise an SIS domain in the interval 56–219; that stretch reads AIEAFNKGGR…STISMIGIGK (164 aa). Glu-84 (proton donor) is an active-site residue. Glu-115 is a catalytic residue.

The protein belongs to the GCKR-like family. MurNAc-6-P etherase subfamily. Homodimer.

It carries out the reaction N-acetyl-D-muramate 6-phosphate + H2O = N-acetyl-D-glucosamine 6-phosphate + (R)-lactate. It functions in the pathway amino-sugar metabolism; N-acetylmuramate degradation. Functionally, specifically catalyzes the cleavage of the D-lactyl ether substituent of MurNAc 6-phosphate, producing GlcNAc 6-phosphate and D-lactate. The sequence is that of N-acetylmuramic acid 6-phosphate etherase from Lactococcus lactis subsp. cremoris (strain MG1363).